We begin with the raw amino-acid sequence, 287 residues long: Pyridoxal kinase PdxY (287 aa).

Residues serine 10 and 45–46 (TQ) contribute to the substrate site. ATP contacts are provided by residues aspartate 112, alanine 144, glutamate 149, lysine 182, and 209–212 (RPLV). A substrate-binding site is contributed by aspartate 224.

The protein belongs to the pyridoxine kinase family. PdxY subfamily. Homodimer. The cofactor is Mg(2+).

It carries out the reaction pyridoxal + ATP = pyridoxal 5'-phosphate + ADP + H(+). It functions in the pathway cofactor metabolism; pyridoxal 5'-phosphate salvage; pyridoxal 5'-phosphate from pyridoxal: step 1/1. Functionally, pyridoxal kinase involved in the salvage pathway of pyridoxal 5'-phosphate (PLP). Catalyzes the phosphorylation of pyridoxal to PLP. The chain is Pyridoxal kinase PdxY from Shigella flexneri.